A 431-amino-acid chain; its full sequence is Histidinol dehydrogenase (431 aa).

The NAD(+) site is built by Tyr-127, Gln-189, and Asn-212. Ser-237, Gln-259, and His-262 together coordinate substrate. 2 residues coordinate Zn(2+): Gln-259 and His-262. Residues Glu-326 and His-327 each act as proton acceptor in the active site. 4 residues coordinate substrate: His-327, Asp-360, Glu-414, and His-419. Asp-360 lines the Zn(2+) pocket. His-419 is a Zn(2+) binding site.

The protein belongs to the histidinol dehydrogenase family. It depends on Zn(2+) as a cofactor.

The catalysed reaction is L-histidinol + 2 NAD(+) + H2O = L-histidine + 2 NADH + 3 H(+). Its pathway is amino-acid biosynthesis; L-histidine biosynthesis; L-histidine from 5-phospho-alpha-D-ribose 1-diphosphate: step 9/9. In terms of biological role, catalyzes the sequential NAD-dependent oxidations of L-histidinol to L-histidinaldehyde and then to L-histidine. The protein is Histidinol dehydrogenase of Xanthomonas campestris pv. campestris (strain ATCC 33913 / DSM 3586 / NCPPB 528 / LMG 568 / P 25).